The primary structure comprises 370 residues: Putative methylthioribose-1-phosphate isomerase (370 aa).

Residues 66–68, R109, and Q217 each bind substrate; that span reads RGA. D258 acts as the Proton donor in catalysis. 268–269 contributes to the substrate binding site; the sequence is NK.

It belongs to the eIF-2B alpha/beta/delta subunits family. MtnA subfamily.

The catalysed reaction is 5-(methylsulfanyl)-alpha-D-ribose 1-phosphate = 5-(methylsulfanyl)-D-ribulose 1-phosphate. Functionally, catalyzes the interconversion of methylthioribose-1-phosphate (MTR-1-P) into methylthioribulose-1-phosphate (MTRu-1-P). This is Putative methylthioribose-1-phosphate isomerase from Aeropyrum pernix (strain ATCC 700893 / DSM 11879 / JCM 9820 / NBRC 100138 / K1).